Consider the following 333-residue polypeptide: 4-hydroxyproline 2-epimerase (333 aa).

Residue Cys91 is the Proton acceptor of the active site. Residues 92 to 93 (GH), His225, and Asp250 each bind substrate. The active-site Proton donor is Cys254. A substrate-binding site is contributed by 255 to 256 (GT).

This sequence belongs to the proline racemase family.

The enzyme catalyses trans-4-hydroxy-L-proline = cis-4-hydroxy-D-proline. Its function is as follows. Catalyzes the epimerization of trans-4-hydroxy-L-proline (t4LHyp) to cis-4-hydroxy-D-proline (c4DHyp). Is likely involved in a degradation pathway that converts t4LHyp to alpha-ketoglutarate. Displays no proline racemase activity. This chain is 4-hydroxyproline 2-epimerase, found in Streptosporangium roseum (strain ATCC 12428 / DSM 43021 / JCM 3005 / KCTC 9067 / NCIMB 10171 / NRRL 2505 / NI 9100).